The primary structure comprises 322 residues: RNA pseudouridine synthase 1 (322 aa).

Residue Asp120 is part of the active site.

Belongs to the pseudouridine synthase RluA family.

The enzyme catalyses a uridine in RNA = a pseudouridine in RNA. This is RNA pseudouridine synthase 1 from Arabidopsis thaliana (Mouse-ear cress).